The primary structure comprises 407 residues: MTDDHPRADIVSRQYHRWLYPHPIADLEAWTTANWEWFDPVHSHRILWPDREYRPDLDILIAGCGTNQAAIFAFTNRAAKVVAIDISRPALDHQQYLKDKHGLANLELHLLPIEELATLGRDFDLVVSTGVLHHLADPRAGMKELAHCLRRDGVVAAMLYGKYGRIGVELLGSVFRDLGLGQDDASIKLAKEAISLLPTYHPLRNYLTKARDLLSDSALVDTFLHGRQRSYTVEECVDLVTSAGLVFQGWFHKAPYYPHDFFVPNSEFYAAVNTLPEVKAWSVMERLETLNATHLFMACRRDRPKEQYTIDFSTVAALDYVPLMRTRCGVSGTDMFWPGWRMAPSPAQLAFLQQVDGRRTIREIAGCVARTGEPSGGSLADLEEFGRKLFQSLWRLDFVAVALPASG.

This is an uncharacterized protein from Mycobacterium bovis (strain ATCC BAA-935 / AF2122/97).